Reading from the N-terminus, the 176-residue chain is Orotate phosphoribosyltransferase (176 aa).

5-phospho-alpha-D-ribose 1-diphosphate-binding positions include arginine 90, lysine 91, lysine 94, and 116 to 124; that span reads EDVTTTGGS. Positions 120 and 148 each coordinate orotate.

This sequence belongs to the purine/pyrimidine phosphoribosyltransferase family. PyrE subfamily. In terms of assembly, homodimer. The cofactor is Mg(2+).

It carries out the reaction orotidine 5'-phosphate + diphosphate = orotate + 5-phospho-alpha-D-ribose 1-diphosphate. It participates in pyrimidine metabolism; UMP biosynthesis via de novo pathway; UMP from orotate: step 1/2. Functionally, catalyzes the transfer of a ribosyl phosphate group from 5-phosphoribose 1-diphosphate to orotate, leading to the formation of orotidine monophosphate (OMP). The polypeptide is Orotate phosphoribosyltransferase (Methanocaldococcus jannaschii (strain ATCC 43067 / DSM 2661 / JAL-1 / JCM 10045 / NBRC 100440) (Methanococcus jannaschii)).